A 396-amino-acid chain; its full sequence is Phosphoglycerate kinase (396 aa).

Residues 21–23 (DFN), Arg36, 59–62 (HLGK), Arg119, and Arg156 contribute to the substrate site. Residues Lys206, Glu325, and 352 to 355 (GGDS) contribute to the ATP site.

It belongs to the phosphoglycerate kinase family. In terms of assembly, monomer.

The protein localises to the cytoplasm. It catalyses the reaction (2R)-3-phosphoglycerate + ATP = (2R)-3-phospho-glyceroyl phosphate + ADP. It participates in carbohydrate degradation; glycolysis; pyruvate from D-glyceraldehyde 3-phosphate: step 2/5. The polypeptide is Phosphoglycerate kinase (Staphylococcus carnosus (strain TM300)).